We begin with the raw amino-acid sequence, 49 residues long: uncharacterized protein (49 aa).

The chain crosses the membrane as a helical span at residues 16–36 (WTCHTGFYLMILLVLFFMYGF).

The protein localises to the cell membrane. This is an uncharacterized protein from Bacillus subtilis (strain 168).